A 129-amino-acid polypeptide reads, in one-letter code: Large ribosomal subunit protein uL22 (129 aa).

It belongs to the universal ribosomal protein uL22 family. Part of the 50S ribosomal subunit.

In terms of biological role, this protein binds specifically to 23S rRNA; its binding is stimulated by other ribosomal proteins, e.g. L4, L17, and L20. It is important during the early stages of 50S assembly. It makes multiple contacts with different domains of the 23S rRNA in the assembled 50S subunit and ribosome. Its function is as follows. The globular domain of the protein is located near the polypeptide exit tunnel on the outside of the subunit, while an extended beta-hairpin is found that lines the wall of the exit tunnel in the center of the 70S ribosome. The protein is Large ribosomal subunit protein uL22 of Prochlorococcus marinus (strain MIT 9211).